Consider the following 108-residue polypeptide: Protein YcgL (108 aa).

One can recognise a YcgL domain in the interval 12–96 (MFCVIYRSSK…PPEDLLKQHL (85 aa)).

The polypeptide is Protein YcgL (Escherichia coli O127:H6 (strain E2348/69 / EPEC)).